Reading from the N-terminus, the 77-residue chain is Acyl carrier protein (77 aa).

The region spanning 1 to 76 (MSIEERVKKI…SAIDYVAKAN (76 aa)) is the Carrier domain. The residue at position 36 (Ser-36) is an O-(pantetheine 4'-phosphoryl)serine.

Belongs to the acyl carrier protein (ACP) family. 4'-phosphopantetheine is transferred from CoA to a specific serine of apo-ACP by AcpS. This modification is essential for activity because fatty acids are bound in thioester linkage to the sulfhydryl of the prosthetic group.

It localises to the cytoplasm. Its pathway is lipid metabolism; fatty acid biosynthesis. Functionally, carrier of the growing fatty acid chain in fatty acid biosynthesis. This is Acyl carrier protein from Haemophilus ducreyi (strain 35000HP / ATCC 700724).